The following is a 194-amino-acid chain: MSLVPVVVEQTNRGERSYDIYSRLLKDRIIMLSDQVNDVTASLIVAQLLFLEAEDPDKDIFLYINSPGGSITSGMAIYDTMQYIKPDVSTICIGMAASMGAFLLAAGAKGKRFALPNSEIMIHQPLGGFQGQATDIGIHADRILKIKQNLNSILSEKTGQPLEVIQRDTERDNFMDANQAKDYGLIDEVMVKKK.

S98 acts as the Nucleophile in catalysis. H123 is a catalytic residue.

Belongs to the peptidase S14 family. In terms of assembly, fourteen ClpP subunits assemble into 2 heptameric rings which stack back to back to give a disk-like structure with a central cavity, resembling the structure of eukaryotic proteasomes.

The protein localises to the cytoplasm. The catalysed reaction is Hydrolysis of proteins to small peptides in the presence of ATP and magnesium. alpha-casein is the usual test substrate. In the absence of ATP, only oligopeptides shorter than five residues are hydrolyzed (such as succinyl-Leu-Tyr-|-NHMec, and Leu-Tyr-Leu-|-Tyr-Trp, in which cleavage of the -Tyr-|-Leu- and -Tyr-|-Trp bonds also occurs).. Cleaves peptides in various proteins in a process that requires ATP hydrolysis. Has a chymotrypsin-like activity. Plays a major role in the degradation of misfolded proteins. The sequence is that of ATP-dependent Clp protease proteolytic subunit from Clostridium tetani (strain Massachusetts / E88).